A 1063-amino-acid chain; its full sequence is MLRLANRVSRKDSGNLGIAQLKKRLLATSGVSQGEILSKYPIGLNMHGYVIEQVQPIPEFSLVAVKLKHSRTGSEHLHLDTPNDKNNVFSVAFKTNAPDATGVPHILEHTTLCGSFKYPVRDPFFKMLNRSLSNFMNAMTGHDYTYYPFATTNAKDFENLMDVYLSSVFEPLLTHESFMQEGWRLENSDLSDPKSPIIFKGVVYNEMKGQYSNSAYYYWIKFQEAIYGSLNNSGGNPNEITDLRYEDLVDFHSSNYHPSNAKTFTYGNIELVNHLNKLNEFFESFGSRGIRTNVRKPITELNPNYESDVTVKGPLDTMSSRPIEEQYKSSITWVIGNPLDESKLYDVFKWKVLSSLLCDGHNSPFYQELIEKEYGEDFAVNYGLDATTALLSFTIGLNNLSLEKAKNLEDKVRGIFVEKIIPELQKGKESGFNDRIEAILHQIELNFKNHKPEFGIGLLSSVVSTWVNGLNPVKSLQIDHILNRFKEDYKLNGLKMFQDLLDESVLKDDTPKFKFTMEPDESFGKNLTSQETERLNKKIEALTEEDKEIIYKRSIELAEKQKKEEDVSALPTLTVKDIPREGDFYPLDFADINSKKLQKRIVDTNGLIYMNATKDISYLPSKYYEYLPLFDCCLTNLAGTSKTPITELEIKIQKLTGGVTFNVSAKTDPFDISKTNMKFMLSGMALKDKSQNVYDLWFEILTQTKFDSEDEQVVDKLFTLVKNLGQNQMNTIADSGHSYANSYSNSQLTPTKYIHNLIGGIGQVSFISDLNRKLETEGRDFLKKELLPVLKDIQRHLVNGFTDGNHSGFEYSLVGDSESVIKNEKMIKEFDDLLTANSNRVAGTNELSSLISQFNSNKLGLNNNGRSTLIDLPFQVGYASLAKLGAAYTSKDGAALRVLSQLLTFKHLHSVIREANGAYGGGLSFDGLGGCLNFYSYRDPNPLTSVQSFKDSTSVALGKMINSENNGWSPKDLQEAKLTIFQGVDAPSHISSQGSLDFLEHITDEMRQERRERFLDVTYEDLKNVTEKYLLNGSQDIVTVIGDNETLKIDSSDAQWNIKKLTA.

Residues 1–33 (MLRLANRVSRKDSGNLGIAQLKKRLLATSGVSQ) constitute a mitochondrion transit peptide. H105 contributes to the Zn(2+) binding site. The Proton acceptor role is filled by E108. Zn(2+) is bound at residue H109. E181 is a catalytic residue. E206 contacts Zn(2+).

Belongs to the peptidase M16 family. PreP subfamily. In terms of assembly, monomer and homodimer; homodimerization is induced by binding of the substrate. Zn(2+) serves as cofactor.

Its subcellular location is the mitochondrion intermembrane space. It is found in the mitochondrion matrix. In terms of biological role, degrades mitochondrial transit peptides after their cleavage in the intermembrane space or in the matrix, and presequence peptides; clearance of these peptides is required to keep the presequence processing machinery running. Preferentially cleaves the N-terminal side of paired basic amino acid residues. Also degrades other unstructured peptides. May function as an ATP-dependent peptidase as opposed to a metalloendopeptidase. The sequence is that of Presequence protease, mitochondrial (CYM1) from Debaryomyces hansenii (strain ATCC 36239 / CBS 767 / BCRC 21394 / JCM 1990 / NBRC 0083 / IGC 2968) (Yeast).